The following is a 344-amino-acid chain: Putative cyclin-Y-like protein 3 (344 aa).

One can recognise a Cyclin N-terminal domain in the interval 40–170 (ERYANRSLAI…FLELLEFNIH (131 aa)).

This sequence belongs to the cyclin family. Cyclin Y subfamily.

The protein is Putative cyclin-Y-like protein 3 (CCNYL3) of Homo sapiens (Human).